Reading from the N-terminus, the 101-residue chain is Citrinin resistance protein, mitochondrial (101 aa).

The protein localises to the mitochondrion. Mitochondrial protein that is involved in citrinin resistance. The chain is Citrinin resistance protein, mitochondrial from Saccharomyces cerevisiae (strain ATCC 204508 / S288c) (Baker's yeast).